Reading from the N-terminus, the 181-residue chain is Bradykinin-potentiating and C-type natriuretic peptides (181 aa).

An N-terminal signal peptide occupies residues 1–23 (MFVSRLAASGLLLLALLAVSLDG). Residues 24 to 30 (KPLQQWS) constitute a propeptide that is removed on maturation. Gln-31 carries the pyrrolidone carboxylic acid modification. Residues 41-43 (LVV) constitute a propeptide that is removed on maturation. Pyrrolidone carboxylic acid is present on Gln-44. Propeptides lie at residues 50–78 (TQLQARESPAGGTTALREELSLGPEAALD) and 90–157 (GSKA…KGLA). The tract at residues 74–153 (EAALDTPPAG…GGGGGGARRL (80 aa)) is disordered. Low complexity predominate over residues 104-114 (SKGASATSAAS). The segment covering 140-150 (AGGGGGGGGGA) has biased composition (gly residues). Cysteines 165 and 181 form a disulfide.

It in the N-terminal section; belongs to the bradykinin-potentiating peptide family. This sequence in the C-terminal section; belongs to the natriuretic peptide family. As to expression, venom gland.

The protein localises to the secreted. Its function is as follows. Bradykinin-potentiating peptide both inhibits the activity of the angiotensin-converting enzyme (ACE) and enhances the action of bradykinin by inhibiting the peptidases that inactivate it. It acts as an indirect hypotensive agent. Antagonizes the vasodilatory actions of bradykinin at the B2 bradykinin receptor. Has no demonstrable hypotensive activity when injected intravenously in rats. Functionally, has a vasorelaxant activity in rat aortic strips and a diuretic potency in anesthetized rats. May act by activating natriuretic receptors (NPR1 and/or NPR2). In Crotalus durissus collilineatus (Brazilian rattlesnake), this protein is Bradykinin-potentiating and C-type natriuretic peptides.